The sequence spans 125 residues: Fluoride-specific ion channel FluC (125 aa).

Transmembrane regions (helical) follow at residues 5–25 (IFLV…VSLL), 33–53 (IFPL…GILV), 66–86 (VKIF…SFSL), and 100–120 (LVLY…LGYI). Residues glycine 76 and threonine 79 each coordinate Na(+).

Belongs to the fluoride channel Fluc/FEX (TC 1.A.43) family.

The protein localises to the cell inner membrane. It carries out the reaction fluoride(in) = fluoride(out). With respect to regulation, na(+) is not transported, but it plays an essential structural role and its presence is essential for fluoride channel function. Fluoride-specific ion channel. Important for reducing fluoride concentration in the cell, thus reducing its toxicity. The protein is Fluoride-specific ion channel FluC of Azobacteroides pseudotrichonymphae genomovar. CFP2.